Here is a 178-residue protein sequence, read N- to C-terminus: Large ribosomal subunit protein uL6 (178 aa).

This sequence belongs to the universal ribosomal protein uL6 family. Part of the 50S ribosomal subunit.

Its function is as follows. This protein binds to the 23S rRNA, and is important in its secondary structure. It is located near the subunit interface in the base of the L7/L12 stalk, and near the tRNA binding site of the peptidyltransferase center. The protein is Large ribosomal subunit protein uL6 of Streptococcus pneumoniae serotype 19F (strain G54).